Here is a 453-residue protein sequence, read N- to C-terminus: Glutamyl-tRNA reductase (453 aa).

Substrate-binding positions include 49–52 (TCNR), Ser109, 114–116 (EQQ), and Gln120. Cys50 (nucleophile) is an active-site residue. 191-196 (GAGSMG) contacts NADP(+). Positions 432-453 (PAAVATPTDLVDGDRTGRDLQA) are disordered. The span at 443–453 (DGDRTGRDLQA) shows a compositional bias: basic and acidic residues.

The protein belongs to the glutamyl-tRNA reductase family. As to quaternary structure, homodimer.

The enzyme catalyses (S)-4-amino-5-oxopentanoate + tRNA(Glu) + NADP(+) = L-glutamyl-tRNA(Glu) + NADPH + H(+). It participates in porphyrin-containing compound metabolism; protoporphyrin-IX biosynthesis; 5-aminolevulinate from L-glutamyl-tRNA(Glu): step 1/2. In terms of biological role, catalyzes the NADPH-dependent reduction of glutamyl-tRNA(Glu) to glutamate 1-semialdehyde (GSA). The protein is Glutamyl-tRNA reductase of Rhodococcus erythropolis (strain PR4 / NBRC 100887).